The sequence spans 95 residues: uncharacterized protein (95 aa).

The chain crosses the membrane as a helical span at residues Leu29 to Leu53.

The protein resides in the membrane. This is an uncharacterized protein from Schizosaccharomyces pombe (strain 972 / ATCC 24843) (Fission yeast).